A 119-amino-acid polypeptide reads, in one-letter code: MNNKSKGRTAEKIARIFLLSKGYQIIFQNYRFSRLGEIDLICCFDNILIFVEVKSRSSLLWGQPEEAVGYEKQGQLKKLANIFLYEFNEFTEYQIRFDVIAILNNNKVKCEISHLRDAF.

This sequence belongs to the UPF0102 family.

The sequence is that of UPF0102 protein Nther_1376 from Natranaerobius thermophilus (strain ATCC BAA-1301 / DSM 18059 / JW/NM-WN-LF).